A 534-amino-acid polypeptide reads, in one-letter code: Lariat debranching enzyme (534 aa).

Residues C8, H10, D39, and N84 each contribute to the a divalent metal cation site. Residues 124 to 154 (SGIFKGHDFLRGHHEFPPYTDSTCRSVYHVR) are lariat recognition loop. A divalent metal cation-binding residues include H174, H226, and H228. Disordered regions lie at residues 242–275 (KLGD…PPPS) and 501–534 (TETP…AQED).

The protein belongs to the lariat debranching enzyme family. Fe(2+) is required as a cofactor. Zn(2+) serves as cofactor. Requires Mn(2+) as cofactor.

The protein resides in the nucleus. Active in presence of diverse metals including Fe(2+), Zn(2+), Mn(2+). Binds two metal cations in two adjacent alpha and beta metal-binding pockets. Its function is as follows. Cleaves the 2'-5' phosphodiester linkage at the branch point of lariat intron pre-mRNAs after splicing and converts them into linear molecules that are subsequently degraded. It thereby facilitates ribonucleotide turnover. The chain is Lariat debranching enzyme (ldbr) from Drosophila melanogaster (Fruit fly).